A 691-amino-acid polypeptide reads, in one-letter code: DNA ligase (691 aa).

Residues 53–57 (DSEYD), 102–103 (SL), and glutamate 135 contribute to the NAD(+) site. Lysine 137 (N6-AMP-lysine intermediate) is an active-site residue. Positions 158, 195, 310, and 334 each coordinate NAD(+). The Zn(2+) site is built by cysteine 428, cysteine 431, cysteine 446, and cysteine 452. One can recognise a BRCT domain in the interval 613 to 691 (SEGLPLDGQT…EEEFLVLVGE (79 aa)).

The protein belongs to the NAD-dependent DNA ligase family. LigA subfamily. It depends on Mg(2+) as a cofactor. Mn(2+) is required as a cofactor.

The catalysed reaction is NAD(+) + (deoxyribonucleotide)n-3'-hydroxyl + 5'-phospho-(deoxyribonucleotide)m = (deoxyribonucleotide)n+m + AMP + beta-nicotinamide D-nucleotide.. DNA ligase that catalyzes the formation of phosphodiester linkages between 5'-phosphoryl and 3'-hydroxyl groups in double-stranded DNA using NAD as a coenzyme and as the energy source for the reaction. It is essential for DNA replication and repair of damaged DNA. This is DNA ligase from Psychrobacter cryohalolentis (strain ATCC BAA-1226 / DSM 17306 / VKM B-2378 / K5).